The chain runs to 207 residues: Uridine kinase (207 aa).

ATP is bound at residue 11 to 18; that stretch reads GGSGSGKT.

Belongs to the uridine kinase family.

It is found in the cytoplasm. It catalyses the reaction uridine + ATP = UMP + ADP + H(+). The enzyme catalyses cytidine + ATP = CMP + ADP + H(+). Its pathway is pyrimidine metabolism; CTP biosynthesis via salvage pathway; CTP from cytidine: step 1/3. The protein operates within pyrimidine metabolism; UMP biosynthesis via salvage pathway; UMP from uridine: step 1/1. This Staphylococcus epidermidis (strain ATCC 35984 / DSM 28319 / BCRC 17069 / CCUG 31568 / BM 3577 / RP62A) protein is Uridine kinase.